The chain runs to 169 residues: uncharacterized protein (169 aa).

In terms of domain architecture, Nudix hydrolase spans 35-163 (LIGRGTFILL…PYCPDSLQAL (129 aa)). The short motif at 81–103 (YADSAARELEEELGIRDAVLREH) is the Nudix box element. Mg(2+) contacts are provided by Glu-88 and Glu-92.

It belongs to the Nudix hydrolase family. The cofactor is Mg(2+).

This is an uncharacterized protein from Pseudomonas aeruginosa (strain ATCC 15692 / DSM 22644 / CIP 104116 / JCM 14847 / LMG 12228 / 1C / PRS 101 / PAO1).